Consider the following 622-residue polypeptide: Cilia- and flagella-associated protein 206 (622 aa).

Belongs to the CFAP206 family.

Its subcellular location is the cytoplasm. It localises to the cytoskeleton. The protein resides in the cilium axoneme. The protein localises to the cilium basal body. Essential for sperm motility and is involved in the regulation of the beating frequency of motile cilia on the epithelial cells of the respiratory tract. Required for the establishment of radial spokes in sperm flagella. The protein is Cilia- and flagella-associated protein 206 of Rattus norvegicus (Rat).